The chain runs to 507 residues: ATP synthase subunit alpha, chloroplastic (507 aa).

Residue 170–177 participates in ATP binding; it reads GDRQTGKT.

It belongs to the ATPase alpha/beta chains family. F-type ATPases have 2 components, CF(1) - the catalytic core - and CF(0) - the membrane proton channel. CF(1) has five subunits: alpha(3), beta(3), gamma(1), delta(1), epsilon(1). CF(0) has four main subunits: a, b, b' and c.

Its subcellular location is the plastid. It is found in the chloroplast thylakoid membrane. The catalysed reaction is ATP + H2O + 4 H(+)(in) = ADP + phosphate + 5 H(+)(out). In terms of biological role, produces ATP from ADP in the presence of a proton gradient across the membrane. The alpha chain is a regulatory subunit. This Nicotiana sylvestris (Wood tobacco) protein is ATP synthase subunit alpha, chloroplastic.